The sequence spans 242 residues: MGRYWAVIPAAGVGRRMGGGDRPKQYRLLLGRPVIGWALERLLGHPKVAGAVVALAADDPHWDALGLDRQVAGKPVHRVEGGAERRDSVRAALAYLGGIANPEDRVLVHDAVRPCLSAAELDRLIDEGGAAVDGALLATPVRDTLKRADGDCVGATVSREGLWQAQTPQLFPLRRLSAALDAALAAGVAVTDEAQAVEWHDGQPRLVTGEAGNLKITHQADLDLAAAVLTAQRAATEREQTA.

This sequence belongs to the IspD/TarI cytidylyltransferase family. IspD subfamily.

It catalyses the reaction 2-C-methyl-D-erythritol 4-phosphate + CTP + H(+) = 4-CDP-2-C-methyl-D-erythritol + diphosphate. It functions in the pathway isoprenoid biosynthesis; isopentenyl diphosphate biosynthesis via DXP pathway; isopentenyl diphosphate from 1-deoxy-D-xylulose 5-phosphate: step 2/6. In terms of biological role, catalyzes the formation of 4-diphosphocytidyl-2-C-methyl-D-erythritol from CTP and 2-C-methyl-D-erythritol 4-phosphate (MEP). The polypeptide is 2-C-methyl-D-erythritol 4-phosphate cytidylyltransferase (Halorhodospira halophila (strain DSM 244 / SL1) (Ectothiorhodospira halophila (strain DSM 244 / SL1))).